Reading from the N-terminus, the 1203-residue chain is MPRVVLNGVTVDFPFQPYPCQQEYMTKVLECLQKKVNGILESPTGTGKTLCLLCSTLAWQQHLRDAVSSLKIAERVQGELFASRTLSSWGSAAAASGDSIECYTDIPKIIYASRTHSQLTQVIRELRNTAYRPKVCVLGSREQLCIHPEVKKQESNHMQISLCRKKVASRSCHFYNNVEAKFLEQDLATPILDIEDLVKNGSKQKMCPYYLSRNMKQQADIIFMPYNYLLDAKSRKAHSIDLKGTVVIFDEAHNVEKICEESASFDLTPRDVASGLEIINQVLEEQARVTQQGELQQEFIVDTSSSGLNMELEDIAKLKMILLRLEEAIDAVQLPGDDRGVTKPGSYIFELFAEAQITFQTKGCILESLDQIIQHLAGRTGVFTNTAGLQKLMDIIQIVFSVDPPEGSPGSLVGLGISHSYKVHIHPETSHRRAAKRSDAWSTTASRKQGKVLSYWCFSPSQSMRELVCQGVRTLILTSGTLAPLSSFALEMQIPFPVCLENPHIIDKNQLWVGIVPRGPDGVQLSSAYDKRFSEECLSSLGKALSNIARVVPHGLLVFFPSYPVMEKSLEFWQVQGLARKVEALKPLFVEPRNKGSFSEVIDAYYQQVASPASNGATFLAVCRGKASEGLDFSDMNGRGVIVTGLPYPPRMDPRVVLKMQFLDEMRGRSGVGGQCLSGQEWYQQQASRAVNQAIGRVIRHRHDYGAIFLCDHRFAYADARAQLPSWVRPYLKVYDNFGHVIRDVAQFFRVAQKTMPLPVPQAVTSSVSEGEIALKDATLSSYSLSTRKAMSLDVHVPSLRQKPIGLPAAGDSESSLCGEYEQQTFSAQQRPMGLLAALEYNEQKAGASEEQALGSSTPSLRCEKRLSTEQKGGRKKVRLVNHPEEPMAGTQAGRAKMFMVAVKQALSQANFDTFTQALQHYKSSDDFEALVASLTCLFAEDPKKHTLLKGFYQFVRPHHKQQFEDICFQLTGQRCGYQPGKRELESKLTLSEGVDRQLDPGQHLNQGQPHLSAHPTSKGHTSHCTKVGCAVEKPGQPAVSDYLSDVHKALGSASCNQLTAALRAYKQDDDLDKVVAVVAALTTAKPEHLPLLQRFGMFVRRHHKPQFLQTCADLMGLPTTGKDLELEGPRDESPTVPPELTHEDLKPGPSMSKKPEKTQSKISSFFRQRPDESVRSDDTTPKPMQLPPRLPHELMKPHRSKQ.

Residues 7 to 296 enclose the Helicase ATP-binding domain; it reads NGVTVDFPFQ…ARVTQQGELQ (290 aa). 42 to 49 provides a ligand contact to ATP; it reads SPTGTGKT. [4Fe-4S] cluster is bound by residues cysteine 145, cysteine 163, cysteine 172, and cysteine 207. Residues 151-167 carry the Nuclear localization signal motif; it reads KKQESNHMQISLCRKKV. The short motif at 250–253 is the DEAH box element; the sequence is DEAH. The short motif at 871–877 is the Nuclear localization signal element; sequence QKGGRKK. Disordered regions lie at residues 998 to 1020 and 1120 to 1203; these read QLDP…TSKG and TTGK…RSKQ. The span at 1004–1020 shows a compositional bias: polar residues; it reads HLNQGQPHLSAHPTSKG. A compositionally biased stretch (basic and acidic residues) spans 1123 to 1134; the sequence is KDLELEGPRDES. The short motif at 1160–1167 is the PIP-box element; sequence QSKISSFF. The segment covering 1169–1181 has biased composition (basic and acidic residues); the sequence is QRPDESVRSDDTT.

The protein belongs to the helicase family. RAD3/XPD subfamily. As to quaternary structure, interacts with TERF1. Interacts (via PIP-box) with PCNA; the interaction is direct and essential for suppressing telomere fragility. Interacts with MMS19; the interaction mediates the association of RTEL1 with the cytosolic iron-sulfur protein assembly (CIA) complex. Widely expressed. Expressed in spleen, thymus, Peyer patches, kidney, and intestine. Not expressed in brain, heart, lung, skeletal muscles, skin and white fat. In the adult gonad, it is highly expressed in the testis, mainly in the spermatogonia and meiotic spermatocytes.

It localises to the nucleus. The catalysed reaction is ATP + H2O = ADP + phosphate + H(+). Its function is as follows. A probable ATP-dependent DNA helicase implicated in telomere-length regulation, DNA repair and the maintenance of genomic stability. Acts as an anti-recombinase to counteract toxic recombination and limit crossover during meiosis. Regulates meiotic recombination and crossover homeostasis by physically dissociating strand invasion events and thereby promotes noncrossover repair by meiotic synthesis dependent strand annealing (SDSA) as well as disassembly of D loop recombination intermediates. Also disassembles T loops and prevents telomere fragility by counteracting telomeric G4-DNA structures, which together ensure the dynamics and stability of the telomere. The sequence is that of Regulator of telomere elongation helicase 1 from Mus musculus (Mouse).